Here is a 121-residue protein sequence, read N- to C-terminus: C-X-C motif chemokine 11-6 (121 aa).

Positions M1–G20 are cleaved as a signal peptide. 2 disulfides stabilise this stretch: C29–C56 and C31–C73. The disordered stretch occupies residues Q95–K121. Residues S100–S115 are compositionally biased toward low complexity.

Belongs to the intercrine alpha (chemokine CxC) family.

Its subcellular location is the secreted. In terms of biological role, ligand for cxcr3.2. Chemotactic for macrophages. This is C-X-C motif chemokine 11-6 from Danio rerio (Zebrafish).